The following is a 456-amino-acid chain: Adenylosuccinate synthetase (456 aa).

Residues 11–17 (GDEGKGG) and 39–41 (GHT) each bind GTP. The active-site Proton acceptor is Asp12. Residues Asp12 and Gly39 each contribute to the Mg(2+) site. IMP contacts are provided by residues 12 to 15 (DEGK), 37 to 40 (NAGH), Thr127, Arg141, Gln232, Thr247, and Arg328. His40 acts as the Proton donor in catalysis. 324–330 (TVTGRPR) is a substrate binding site. Residues Arg330, 356-358 (HLD), and 441-443 (GVG) each bind GTP.

This sequence belongs to the adenylosuccinate synthetase family. In terms of assembly, homodimer. It depends on Mg(2+) as a cofactor.

The protein resides in the cytoplasm. It carries out the reaction IMP + L-aspartate + GTP = N(6)-(1,2-dicarboxyethyl)-AMP + GDP + phosphate + 2 H(+). The protein operates within purine metabolism; AMP biosynthesis via de novo pathway; AMP from IMP: step 1/2. Its function is as follows. Plays an important role in the de novo pathway of purine nucleotide biosynthesis. Catalyzes the first committed step in the biosynthesis of AMP from IMP. The chain is Adenylosuccinate synthetase from Natronomonas pharaonis (strain ATCC 35678 / DSM 2160 / CIP 103997 / JCM 8858 / NBRC 14720 / NCIMB 2260 / Gabara) (Halobacterium pharaonis).